Consider the following 397-residue polypeptide: 2-deoxy-scyllo-inosose synthase (397 aa).

Residues aspartate 41, glutamate 71–lysine 74, glycine 103–asparagine 107, threonine 127–serine 128, serine 138–lysine 140, and lysine 149–asparagine 150 each bind NAD(+). Lysine 140 is a catalytic residue. Position 182 (glutamate 182) interacts with Co(2+). Glutamate 242 is an active-site residue. Co(2+)-binding residues include histidine 245 and histidine 261.

Belongs to the sugar phosphate cyclases superfamily. DOI synthase family. Requires NAD(+) as cofactor. It depends on Co(2+) as a cofactor.

It carries out the reaction D-glucose 6-phosphate = 2-deoxy-L-scyllo-inosose + phosphate. The protein operates within metabolic intermediate biosynthesis; 2-deoxystreptamine biosynthesis; 2-deoxystreptamine from D-glucose 6-phosphate: step 1/4. It functions in the pathway antibiotic biosynthesis; gentamicin biosynthesis. In terms of biological role, catalyzes the intramolecular carbocycle formation from D-glucose-6-phosphate to 2-deoxy-scyllo-inosose (DOI). This chain is 2-deoxy-scyllo-inosose synthase (gtmA), found in Micromonospora echinospora (Micromonospora purpurea).